Reading from the N-terminus, the 491-residue chain is Ketol-acid reductoisomerase (NADP(+)) (491 aa).

One can recognise a KARI N-terminal Rossmann domain in the interval 14 to 208 (LDQLGRCRFM…GGHRAGVLES (195 aa)). Residues 45-48 (CGAQ), R68, R76, S78, and 108-110 (DKQ) each bind NADP(+). Residue H132 is part of the active site. An NADP(+)-binding site is contributed by G158. 2 consecutive KARI C-terminal knotted domains span residues 209 to 344 (SFVA…NAPK) and 345 to 485 (YEGK…MTDM). D217, E221, E389, and E393 together coordinate Mg(2+). Residue S414 participates in substrate binding.

The protein belongs to the ketol-acid reductoisomerase family. The cofactor is Mg(2+).

The enzyme catalyses (2R)-2,3-dihydroxy-3-methylbutanoate + NADP(+) = (2S)-2-acetolactate + NADPH + H(+). It catalyses the reaction (2R,3R)-2,3-dihydroxy-3-methylpentanoate + NADP(+) = (S)-2-ethyl-2-hydroxy-3-oxobutanoate + NADPH + H(+). It participates in amino-acid biosynthesis; L-isoleucine biosynthesis; L-isoleucine from 2-oxobutanoate: step 2/4. It functions in the pathway amino-acid biosynthesis; L-valine biosynthesis; L-valine from pyruvate: step 2/4. Its function is as follows. Involved in the biosynthesis of branched-chain amino acids (BCAA). Catalyzes an alkyl-migration followed by a ketol-acid reduction of (S)-2-acetolactate (S2AL) to yield (R)-2,3-dihydroxy-isovalerate. In the isomerase reaction, S2AL is rearranged via a Mg-dependent methyl migration to produce 3-hydroxy-3-methyl-2-ketobutyrate (HMKB). In the reductase reaction, this 2-ketoacid undergoes a metal-dependent reduction by NADPH to yield (R)-2,3-dihydroxy-isovalerate. The polypeptide is Ketol-acid reductoisomerase (NADP(+)) (Pasteurella multocida (strain Pm70)).